Reading from the N-terminus, the 151-residue chain is 1,4-dihydroxy-2-naphthoyl-CoA hydrolase (151 aa).

The active site involves Asp-23.

The protein belongs to the 4-hydroxybenzoyl-CoA thioesterase family. DHNA-CoA hydrolase subfamily.

The catalysed reaction is 1,4-dihydroxy-2-naphthoyl-CoA + H2O = 1,4-dihydroxy-2-naphthoate + CoA + H(+). The protein operates within cofactor biosynthesis; phylloquinone biosynthesis. Its pathway is quinol/quinone metabolism; 1,4-dihydroxy-2-naphthoate biosynthesis; 1,4-dihydroxy-2-naphthoate from chorismate: step 7/7. Catalyzes the hydrolysis of 1,4-dihydroxy-2-naphthoyl-CoA (DHNA-CoA) to 1,4-dihydroxy-2-naphthoate (DHNA), a reaction involved in phylloquinone (vitamin K1) biosynthesis. The protein is 1,4-dihydroxy-2-naphthoyl-CoA hydrolase of Prochlorococcus marinus (strain MIT 9211).